The primary structure comprises 115 residues: uncharacterized protein (115 aa).

One can recognise an MSP domain in the interval 1–115 (MGVEISLDPP…ETVIKLSAAE (115 aa)).

This is an uncharacterized protein from Caenorhabditis elegans.